Consider the following 185-residue polypeptide: Proton-translocating ferredoxin:NAD(+) oxidoreductase complex subunit G (185 aa).

Residues Thr14–Ile34 traverse the membrane as a helical segment. Thr161 carries the post-translational modification FMN phosphoryl threonine.

It belongs to the RnfG family. The complex is composed of six subunits: RnfA, RnfB, RnfC, RnfD, RnfE and RnfG. FMN is required as a cofactor.

The protein localises to the cell membrane. In terms of biological role, part of a membrane-bound complex that couples electron transfer with translocation of ions across the membrane. Couples electron transfer from reduced ferredoxin to NAD(+) with translocation of H(+) out of the cell. Essential for energy conservation during autotrophic growth. Contributes to ATP synthesis during heterotrophic growth. This chain is Proton-translocating ferredoxin:NAD(+) oxidoreductase complex subunit G, found in Clostridium ljungdahlii (strain ATCC 55383 / DSM 13528 / PETC).